A 98-amino-acid chain; its full sequence is Large ribosomal subunit protein uL23 (98 aa).

This sequence belongs to the universal ribosomal protein uL23 family. In terms of assembly, part of the 50S ribosomal subunit. Contacts protein L29, and trigger factor when it is bound to the ribosome.

Its function is as follows. One of the early assembly proteins it binds 23S rRNA. One of the proteins that surrounds the polypeptide exit tunnel on the outside of the ribosome. Forms the main docking site for trigger factor binding to the ribosome. The protein is Large ribosomal subunit protein uL23 of Hydrogenovibrio crunogenus (strain DSM 25203 / XCL-2) (Thiomicrospira crunogena).